The chain runs to 764 residues: 5-methyltetrahydropteroyltriglutamate--homocysteine methyltransferase (764 aa).

5-methyltetrahydropteroyltri-L-glutamate is bound by residues 16-19 (RELK) and lysine 121. L-homocysteine is bound by residues 440–442 (IGS) and glutamate 493. Residues 440–442 (IGS) and glutamate 493 contribute to the L-methionine site. 5-methyltetrahydropteroyltri-L-glutamate-binding positions include 524 to 525 (RC) and tryptophan 570. Residue aspartate 608 participates in L-homocysteine binding. Aspartate 608 is a binding site for L-methionine. Residue glutamate 614 participates in 5-methyltetrahydropteroyltri-L-glutamate binding. Residues histidine 650, cysteine 652, and glutamate 674 each contribute to the Zn(2+) site. Residue histidine 703 is the Proton donor of the active site. A Zn(2+)-binding site is contributed by cysteine 735.

It belongs to the vitamin-B12 independent methionine synthase family. Requires Zn(2+) as cofactor.

It carries out the reaction 5-methyltetrahydropteroyltri-L-glutamate + L-homocysteine = tetrahydropteroyltri-L-glutamate + L-methionine. The protein operates within amino-acid biosynthesis; L-methionine biosynthesis via de novo pathway; L-methionine from L-homocysteine (MetE route): step 1/1. Catalyzes the transfer of a methyl group from 5-methyltetrahydrofolate to homocysteine resulting in methionine formation. This chain is 5-methyltetrahydropteroyltriglutamate--homocysteine methyltransferase, found in Burkholderia orbicola (strain MC0-3).